A 109-amino-acid chain; its full sequence is Spermidine export protein MdtI (109 aa).

Transmembrane regions (helical) follow at residues 6–26 (WIHG…NVLL), 36–56 (CYGI…SQAV), 64–84 (AYAL…WVLF), and 88–108 (LNPK…MIKF).

This sequence belongs to the drug/metabolite transporter (DMT) superfamily. Small multidrug resistance (SMR) (TC 2.A.7.1) family. MdtI subfamily. In terms of assembly, forms a complex with MdtJ.

It localises to the cell inner membrane. In terms of biological role, catalyzes the excretion of spermidine. The polypeptide is Spermidine export protein MdtI (Salmonella paratyphi A (strain ATCC 9150 / SARB42)).